Reading from the N-terminus, the 113-residue chain is Iron-sulfur cluster insertion protein ErpA (113 aa).

Positions 41, 105, and 107 each coordinate iron-sulfur cluster.

This sequence belongs to the HesB/IscA family. As to quaternary structure, homodimer. Requires iron-sulfur cluster as cofactor.

Required for insertion of 4Fe-4S clusters for at least IspG. This is Iron-sulfur cluster insertion protein ErpA from Photobacterium profundum (strain SS9).